Reading from the N-terminus, the 79-residue chain is D-alanyl carrier protein (79 aa).

Residues 1 to 77 (MDTKQGVLDI…KIVAKVESLE (77 aa)) enclose the Carrier domain. O-(pantetheine 4'-phosphoryl)serine is present on S35.

This sequence belongs to the DltC family. Post-translationally, 4'-phosphopantetheine is transferred from CoA to a specific serine of apo-DCP.

The protein localises to the cytoplasm. Its pathway is cell wall biogenesis; lipoteichoic acid biosynthesis. In terms of biological role, carrier protein involved in the D-alanylation of lipoteichoic acid (LTA). The loading of thioester-linked D-alanine onto DltC is catalyzed by D-alanine--D-alanyl carrier protein ligase DltA. The DltC-carried D-alanyl group is further transferred to cell membrane phosphatidylglycerol (PG) by forming an ester bond, probably catalyzed by DltD. D-alanylation of LTA plays an important role in modulating the properties of the cell wall in Gram-positive bacteria, influencing the net charge of the cell wall. The sequence is that of D-alanyl carrier protein from Lactobacillus helveticus (strain DPC 4571).